The chain runs to 137 residues: MKRLEKISSIVPILLRITLNLALIMVGFTLVAFLIREAFTIFNNIFFLDTDVSYYYMTQDILTFFLYFEFIALIVKYFESHFHFPLRYFIYIGITAIIRFIIVDHSSATSTLILSGAILLLVAALFLANTKLLKREG.

4 consecutive transmembrane segments (helical) span residues 15–35, 55–75, 82–102, and 108–128; these read LRIT…AFLI, YYMT…ALIV, FHFP…RFII, and ATST…LFLA.

Belongs to the PsiE family.

Its subcellular location is the cell membrane. This Listeria innocua serovar 6a (strain ATCC BAA-680 / CLIP 11262) protein is Protein PsiE homolog.